Reading from the N-terminus, the 554-residue chain is Hydroxylamine reductase (554 aa).

Residues Cys-3, Cys-6, Cys-18, and Cys-25 each contribute to the [2Fe-2S] cluster site. 8 residues coordinate hybrid [4Fe-2O-2S] cluster: His-252, Glu-276, Cys-320, Cys-408, Cys-436, Cys-461, Glu-495, and Lys-497. Cys-408 is subject to Cysteine persulfide.

The protein belongs to the HCP family. [2Fe-2S] cluster serves as cofactor. It depends on hybrid [4Fe-2O-2S] cluster as a cofactor.

The protein localises to the cytoplasm. It catalyses the reaction A + NH4(+) + H2O = hydroxylamine + AH2 + H(+). In terms of biological role, catalyzes the reduction of hydroxylamine to form NH(3) and H(2)O. The protein is Hydroxylamine reductase of Shewanella amazonensis (strain ATCC BAA-1098 / SB2B).